The following is a 187-amino-acid chain: Putative adenylate kinase (187 aa).

ATP-binding residues include Gly-10, Gly-12, Lys-13, Thr-14, and Ile-15. An NMP region spans residues 30–53; that stretch reads SLSQFVIENKLYTEYDELRQSYII. An LID region spans residues 103–113; sequence GRGWADIKVAE. Arg-104 serves as a coordination point for ATP.

The protein belongs to the adenylate kinase family. AK6 subfamily. Interacts with uS11. Not a structural component of 40S pre-ribosomes, but transiently interacts with them by binding to uS11.

The enzyme catalyses AMP + ATP = 2 ADP. It catalyses the reaction ATP + H2O = ADP + phosphate + H(+). In terms of biological role, broad-specificity nucleoside monophosphate (NMP) kinase that catalyzes the reversible transfer of the terminal phosphate group between nucleoside triphosphates and monophosphates. Also has ATPase activity. Involved in the late maturation steps of the 30S ribosomal particles, specifically 16S rRNA maturation. While NMP activity is not required for ribosome maturation, ATPase activity is. Associates transiently with small ribosomal subunit protein uS11. ATP hydrolysis breaks the interaction with uS11. May temporarily remove uS11 from the ribosome to enable a conformational change of the ribosomal RNA that is needed for the final maturation step of the small ribosomal subunit. This chain is Putative adenylate kinase, found in Saccharolobus islandicus (strain L.S.2.15 / Lassen #1) (Sulfolobus islandicus).